Here is a 715-residue protein sequence, read N- to C-terminus: Nucleolar complex protein 2 homolog (715 aa).

3 disordered regions span residues 17–71, 85–132, and 638–715; these read SKRI…HKLD, FLQQ…DKTK, and ERSA…SDED. The segment covering 89-128 has biased composition (acidic residues); it reads EDADLLNMEDDGDDDEDDDEDDEDEEEEESDDDEDDEEDD. Residues 638-660 show a composition bias toward basic and acidic residues; that stretch reads ERSAVENSKKDDKKKKKEEEAAA.

Belongs to the NOC2 family.

It is found in the nucleus. In terms of biological role, required for normal somatic gonad development and for regulation of germline development and proliferation. The sequence is that of Nucleolar complex protein 2 homolog (pro-2) from Caenorhabditis elegans.